We begin with the raw amino-acid sequence, 399 residues long: Probable peptidoglycan glycosyltransferase FtsW (399 aa).

The next 9 membrane-spanning stretches (helical) occupy residues 19–39 (PLPV…VMIS), 61–81 (ILFA…PVSW), 85–105 (SGWL…TPLG), 114–134 (WIPM…CLIA), 160–180 (VLGV…TVVL), 198–218 (FMPL…TQPY), 285–305 (LLGA…GLVI), 314–334 (MAFG…QAGI), and 350–370 (LPLV…IAVI).

This sequence belongs to the SEDS family. FtsW subfamily.

It localises to the cell inner membrane. The catalysed reaction is [GlcNAc-(1-&gt;4)-Mur2Ac(oyl-L-Ala-gamma-D-Glu-L-Lys-D-Ala-D-Ala)](n)-di-trans,octa-cis-undecaprenyl diphosphate + beta-D-GlcNAc-(1-&gt;4)-Mur2Ac(oyl-L-Ala-gamma-D-Glu-L-Lys-D-Ala-D-Ala)-di-trans,octa-cis-undecaprenyl diphosphate = [GlcNAc-(1-&gt;4)-Mur2Ac(oyl-L-Ala-gamma-D-Glu-L-Lys-D-Ala-D-Ala)](n+1)-di-trans,octa-cis-undecaprenyl diphosphate + di-trans,octa-cis-undecaprenyl diphosphate + H(+). It participates in cell wall biogenesis; peptidoglycan biosynthesis. Peptidoglycan polymerase that is essential for cell division. In Marinobacter nauticus (strain ATCC 700491 / DSM 11845 / VT8) (Marinobacter aquaeolei), this protein is Probable peptidoglycan glycosyltransferase FtsW.